A 360-amino-acid polypeptide reads, in one-letter code: MKPSIYGLTRDELIAWAIDNGQKAFRATQIWDWLYRKRVQSFDEMTNISKEFVAILKDSFCINPLKQRVAQESADGTVKYLFELPDGMLIETVLMRQHYGQSVCVTTQVGCNIGCTFCASGLIKKQRDLNSGEITAQIMMVQNYFDKRAQDERVSHVVVMGIGEPFDNYQNVMTFLRTINDDHGLAIGARHITVSTSGLAHKIREFANEGVQVNLAVSLHAPNNELRSSIMRINRSFPLDKLFSAIEYYIETTNRRVTFEYIMLNKVNDGVEQAQELADLTKRIRKLSYVNLIPYNPVSEHDQYSRSPKERVAAFYDILKKNGVNCVVRQEHGTDIDAACGQLRSNTMKKDRQKAAAART.

The active-site Proton acceptor is the Glu91. In terms of domain architecture, Radical SAM core spans 97 to 335 (QHYGQSVCVT…CVVRQEHGTD (239 aa)). Cys104 and Cys340 are oxidised to a cystine. The [4Fe-4S] cluster site is built by Cys111, Cys115, and Cys118. S-adenosyl-L-methionine is bound by residues 163-164 (GE), Ser195, 218-220 (SLH), and Asn296. Catalysis depends on Cys340, which acts as the S-methylcysteine intermediate.

The protein belongs to the radical SAM superfamily. RlmN family. [4Fe-4S] cluster is required as a cofactor.

It localises to the cytoplasm. The catalysed reaction is adenosine(2503) in 23S rRNA + 2 reduced [2Fe-2S]-[ferredoxin] + 2 S-adenosyl-L-methionine = 2-methyladenosine(2503) in 23S rRNA + 5'-deoxyadenosine + L-methionine + 2 oxidized [2Fe-2S]-[ferredoxin] + S-adenosyl-L-homocysteine. The enzyme catalyses adenosine(37) in tRNA + 2 reduced [2Fe-2S]-[ferredoxin] + 2 S-adenosyl-L-methionine = 2-methyladenosine(37) in tRNA + 5'-deoxyadenosine + L-methionine + 2 oxidized [2Fe-2S]-[ferredoxin] + S-adenosyl-L-homocysteine. In terms of biological role, specifically methylates position 2 of adenine 2503 in 23S rRNA and position 2 of adenine 37 in tRNAs. This is Probable dual-specificity RNA methyltransferase RlmN from Streptococcus equi subsp. equi (strain 4047).